A 188-amino-acid polypeptide reads, in one-letter code: Gag polyprotein (188 aa).

The segment covering 77–90 has biased composition (basic and acidic residues); sequence VGETTVQRDAKMAP. Positions 77–99 are disordered; it reads VGETTVQRDAKMAPEETATPKTV. The PPXY motif motif lies at 121–124; it reads PPPY. A disordered region spans residues 130-166; the sequence is YPSLAGVGEQQGQGGDTPRGAEQPRAEPGHAGLAPGP.

In terms of processing, specific enzymatic cleavages in vivo yield mature proteins.

It localises to the virion. The sequence is that of Gag polyprotein (ev-2) from Galliformes (EV-2).